A 524-amino-acid polypeptide reads, in one-letter code: 2-isopropylmalate synthase (524 aa).

Positions 5 to 267 (VIIFDTTLRD…HTNIRHSEIH (263 aa)) constitute a Pyruvate carboxyltransferase domain. Residues Asp14, His202, His204, and Asn238 each coordinate Mn(2+). A regulatory domain region spans residues 392–524 (KLEYLGVQSG…KTDKINTESV (133 aa)).

This sequence belongs to the alpha-IPM synthase/homocitrate synthase family. LeuA type 1 subfamily. In terms of assembly, homodimer. It depends on Mn(2+) as a cofactor.

The protein resides in the cytoplasm. The catalysed reaction is 3-methyl-2-oxobutanoate + acetyl-CoA + H2O = (2S)-2-isopropylmalate + CoA + H(+). It participates in amino-acid biosynthesis; L-leucine biosynthesis; L-leucine from 3-methyl-2-oxobutanoate: step 1/4. Its function is as follows. Catalyzes the condensation of the acetyl group of acetyl-CoA with 3-methyl-2-oxobutanoate (2-ketoisovalerate) to form 3-carboxy-3-hydroxy-4-methylpentanoate (2-isopropylmalate). The polypeptide is 2-isopropylmalate synthase (Aeromonas salmonicida (strain A449)).